The sequence spans 360 residues: Serine/threonine-protein phosphatase 2A activator 2 (360 aa).

This sequence belongs to the PTPA-type PPIase family.

It localises to the cytoplasm. The catalysed reaction is [protein]-peptidylproline (omega=180) = [protein]-peptidylproline (omega=0). Functionally, PPIases accelerate the folding of proteins. It catalyzes the cis-trans isomerization of proline imidic peptide bonds in oligopeptides. Acts as a regulatory subunit for PP2A-like phosphatases modulating their activity or substrate specificity, probably by inducing a conformational change in the catalytic subunit, a direct target of the PPIase. Can reactivate inactive phosphatase PP2A-phosphatase methylesterase complexes (PP2Ai) in presence of ATP and Mg(2+) by dissociating the inactive form from the complex. This is Serine/threonine-protein phosphatase 2A activator 2 (RRD2) from Kluyveromyces lactis (strain ATCC 8585 / CBS 2359 / DSM 70799 / NBRC 1267 / NRRL Y-1140 / WM37) (Yeast).